We begin with the raw amino-acid sequence, 245 residues long: Probable ABC transporter permease protein HI_0355 (245 aa).

6 consecutive transmembrane segments (helical) span residues 9–29 (LLIV…GSFP), 61–81 (ICLG…LLSF), 92–112 (ILVI…VLWF), 115–135 (GMAS…TAAC), 170–190 (LPAF…GAVV), and 217–237 (FAAL…IDWL). Positions 50-234 (LWQHTQVTLL…SISLCLYFSI (185 aa)) constitute an ABC transmembrane type-1 domain.

It belongs to the binding-protein-dependent transport system permease family. CysTW subfamily.

Its subcellular location is the cell inner membrane. In terms of biological role, probably part of a binding-protein-dependent transport system. Probably responsible for the translocation of the substrate across the membrane. The polypeptide is Probable ABC transporter permease protein HI_0355 (Haemophilus influenzae (strain ATCC 51907 / DSM 11121 / KW20 / Rd)).